The following is a 524-amino-acid chain: Lysophospholipid acyltransferase LPCAT4 (524 aa).

A run of 2 helical transmembrane segments spans residues 40-62 (CLLG…FLLW) and 87-107 (TVCH…LGFL). The short motif at 129–134 (HSTFFD) is the HXXXXD motif element. Asparagine 152 carries an N-linked (GlcNAc...) asparagine glycan. Residues 490–524 (PHKPRSTSQIPNASSPSSPTALANGTVQAPKQKGD) are disordered. The span at 495 to 518 (STSQIPNASSPSSPTALANGTVQA) shows a compositional bias: polar residues.

This sequence belongs to the 1-acyl-sn-glycerol-3-phosphate acyltransferase family. Widely expressed with much higher level in brain. Expressed in erythroleukemic cells but not in reticulocytes.

It is found in the endoplasmic reticulum membrane. It carries out the reaction a 1-acyl-sn-glycero-3-phosphoethanolamine + an acyl-CoA = a 1,2-diacyl-sn-glycero-3-phosphoethanolamine + CoA. The enzyme catalyses a 1-O-(1Z-alkenyl)-sn-glycero-3-phosphoethanolamine + an acyl-CoA = a 1-O-(1Z-alkenyl)-2-acyl-sn-glycero-3-phosphoethanolamine + CoA. The catalysed reaction is a 1-acyl-sn-glycero-3-phosphocholine + an acyl-CoA = a 1,2-diacyl-sn-glycero-3-phosphocholine + CoA. It catalyses the reaction a 1-O-alkyl-sn-glycero-3-phosphocholine + acetyl-CoA = a 1-O-alkyl-2-acetyl-sn-glycero-3-phosphocholine + CoA. It carries out the reaction a 1-acyl-sn-glycero-3-phospho-L-serine + an acyl-CoA = a 1,2-diacyl-sn-glycero-3-phospho-L-serine + CoA. The enzyme catalyses octanoyl-CoA + a 1-acyl-sn-glycero-3-phosphoethanolamine = 1-acyl-2-octanoyl-sn-glycero-3-phosphoethanolamine + CoA. The catalysed reaction is a 1-acyl-sn-glycero-3-phosphoethanolamine + hexadecanoyl-CoA = 1-acyl-2-hexadecanoyl-sn-glycero-3-phosphoethanolamine + CoA. It catalyses the reaction a 1-acyl-sn-glycero-3-phosphoethanolamine + octadecanoyl-CoA = 1-acyl-2-octadecanoyl-sn-glycero-3-phosphoethanolamine + CoA. It carries out the reaction a 1-acyl-sn-glycero-3-phosphoethanolamine + (9Z)-octadecenoyl-CoA = 1-acyl-2-(9Z)-octadecenoyl-sn-glycero-3-phosphoethanolamine + CoA. The enzyme catalyses a 1-acyl-sn-glycero-3-phosphoethanolamine + (5Z,8Z,11Z,14Z)-eicosatetraenoyl-CoA = 1-acyl-2-(5Z,8Z,11Z,14Z)-eicosatetraenoyl-sn-glycero-3-phosphoethanolamine + CoA. The catalysed reaction is a 1-O-(1Z-alkenyl)-sn-glycero-3-phosphoethanolamine + octanoyl-CoA = 1-O-(1Z)-alkenyl-2-octanoyl-sn-glycero-3-phosphoethanolamine + CoA. It catalyses the reaction a 1-O-(1Z-alkenyl)-sn-glycero-3-phosphoethanolamine + hexadecanoyl-CoA = 1-O-(1Z)-alkenyl-2-hexadecanoyl-sn-glycero-3-phosphoethanolamine + CoA. It carries out the reaction a 1-O-(1Z-alkenyl)-sn-glycero-3-phosphoethanolamine + octadecanoyl-CoA = 1-O-(1Z)-alkenyl-2-octadecanoyl-sn-glycero-3-phosphoethanolamine + CoA. The enzyme catalyses a 1-O-(1Z-alkenyl)-sn-glycero-3-phosphoethanolamine + (9Z)-octadecenoyl-CoA = 1-O-(1Z)-alkenyl-2-(9Z)-octadecenoyl-sn-glycero-3-phosphoethanolamine + CoA. The catalysed reaction is a 1-O-(1Z-alkenyl)-sn-glycero-3-phosphoethanolamine + (5Z,8Z,11Z,14Z)-eicosatetraenoyl-CoA = 1-O-(1Z)-alkenyl-2-(5Z,8Z,11Z,14Z)-eicosatetraenoyl-sn-glycero-3-phosphoethanolamine + CoA. It catalyses the reaction a 1-acyl-sn-glycero-3-phosphocholine + hexadecanoyl-CoA = 1-acyl-2-hexadecanoyl-sn-glycero-3-phosphocholine + CoA. It carries out the reaction a 1-acyl-sn-glycero-3-phosphocholine + (9Z)-octadecenoyl-CoA = a 1-acyl-2-(9Z)-octadecenoyl-sn-glycero-3-phosphocholine + CoA. The enzyme catalyses 1-O-hexadecyl-sn-glycero-3-phosphocholine + (9Z)-octadecenoyl-CoA = 1-O-hexadecyl-2-(9Z)-octadecenoyl-sn-glycero-3-phosphocholine + CoA. The catalysed reaction is 1-O-hexadecyl-sn-glycero-3-phosphocholine + (5Z,8Z,11Z,14Z)-eicosatetraenoyl-CoA = 1-O-hexadecyl-2-(5Z,8Z,11Z,14Z)-eicosatetraenoyl-sn-glycero-3-phosphocholine + CoA. It catalyses the reaction 1-hexadecanoyl-sn-glycero-3-phospho-L-serine + (9Z)-octadecenoyl-CoA = 1-hexadecanoyl-2-(9Z-octadecenoyl)-sn-glycero-3-phospho-L-serine + CoA. It carries out the reaction 1-octadecanoyl-sn-glycero-3-phospho-(1'-sn-glycerol) + (9Z)-octadecenoyl-CoA = 1-octadecanoyl-2-(9Z-octadecenoyl)-sn-glycero-3-phospho-(1'-sn-glycerol) + CoA. The enzyme catalyses 1-octadecanoyl-sn-glycero-3-phospho-(1'-sn-glycerol) + (5Z,8Z,11Z,14Z)-eicosatetraenoyl-CoA = 1-octadecanoyl-2-(5Z,8Z,11Z,14Z-eicosatetraenoyl)-sn-glycero-3-phospho-(1'-sn-glycerol) + CoA. It participates in lipid metabolism; phospholipid metabolism. Its function is as follows. Displays acyl-CoA-dependent lysophospholipid acyltransferase activity with a subset of lysophospholipids as substrates; converts lysophosphatidylethanolamine to phosphatidylethanolamine, 1-alkenyl-lysophatidylethanolamine to 1-alkenyl-phosphatidylethanolamine, lysophosphatidylglycerol and alkyl-lysophosphatidylcholine to phosphatidylglycerol and alkyl-phosphatidylcholine, respectively. In contrast, has no lysophosphatidylinositol, glycerol-3-phosphate, diacylglycerol or lysophosphatidic acid acyltransferase activity. Prefers long chain acyl-CoAs (C16, C18) as acyl donors. Converts lysophosphatidylcholine to phosphatidycholine. In Mus musculus (Mouse), this protein is Lysophospholipid acyltransferase LPCAT4 (Lpcat4).